The sequence spans 157 residues: UPF0758 protein VC_0510 (157 aa).

One can recognise an MPN domain in the interval Ala-36–Leu-157. Residues His-107, His-109, and Asp-120 each contribute to the Zn(2+) site. The JAMM motif motif lies at His-107–Asp-120.

The protein belongs to the UPF0758 family.

The protein is UPF0758 protein VC_0510 of Vibrio cholerae serotype O1 (strain ATCC 39315 / El Tor Inaba N16961).